The following is a 354-amino-acid chain: Macrosialin (354 aa).

A signal peptide spans 1 to 21; that stretch reads MRLAVLFSGALLGLLAAQGTG. The Extracellular segment spans residues 22 to 319; sequence NDCPHKKSAT…QSFSCPSDRS (298 aa). A mucin-like region spans residues 23-140; that stretch reads DCPHKKSATL…SPGFTSSAHP (118 aa). Residues 40-51 are compositionally biased toward low complexity; sequence PTVTESTGTTSH. Residues 40 to 162 are disordered; that stretch reads PTVTESTGTT…SKETIGDYTW (123 aa). Positions 52–61 are enriched in basic residues; sequence RTTKSHKTTT. Positions 62–84 are enriched in low complexity; it reads HRTTTTGTTSHGPTTATHNPTTT. Tandem repeats lie at residues 70–99 and 100–129. The tract at residues 70 to 129 is 2 X 30 AA tandem repeats; sequence TSHGPTTATHNPTTTSHGNVTVHPTSNSTATSQGPSTATHSPATTSHGNATVHPTSNSTA. Positions 85–102 are enriched in polar residues; the sequence is SHGNVTVHPTSNSTATSQ. Residues Asn88 and Asn96 are each glycosylated (N-linked (GlcNAc...) asparagine). Residues 103–117 are compositionally biased toward low complexity; that stretch reads GPSTATHSPATTSHG. N-linked (GlcNAc...) asparagine glycosylation is found at Asn118 and Asn126. The segment covering 121 to 135 has biased composition (polar residues); the sequence is VHPTSNSTATSPGFT. Residues 140-150 show a composition bias toward pro residues; the sequence is PEPPPPSPSPS. N-linked (GlcNAc...) asparagine glycosylation is found at Asn164, Asn199, Asn246, Asn261, and Asn279. Residues Cys169 and Cys207 are joined by a disulfide bond. Cysteines 277 and 314 form a disulfide. Residues 320 to 344 form a helical membrane-spanning segment; that stretch reads ILLPLIIGLILLGLLALVLIAFCII. The Cytoplasmic segment spans residues 345-354; sequence RRRPSAYQAL.

It belongs to the LAMP family. N- and O-glycosylated. Highly expressed by blood monocytes and tissue macrophages. Also expressed in lymphocytes, fibroblasts and endothelial cells. Expressed in many tumor cell lines which could allow them to attach to selectins on vascular endothelium, facilitating their dissemination to secondary sites.

The protein resides in the cell membrane. It localises to the endosome membrane. It is found in the lysosome membrane. Could play a role in phagocytic activities of tissue macrophages, both in intracellular lysosomal metabolism and extracellular cell-cell and cell-pathogen interactions. Binds to tissue- and organ-specific lectins or selectins, allowing homing of macrophage subsets to particular sites. Rapid recirculation of CD68 from endosomes and lysosomes to the plasma membrane may allow macrophages to crawl over selectin-bearing substrates or other cells. This chain is Macrosialin (CD68), found in Homo sapiens (Human).